A 377-amino-acid polypeptide reads, in one-letter code: Testis-expressed protein 13A (377 aa).

A required for repression of transcription region spans residues 92-377 (WLQDLSSLHK…CGKGIWLQNP (286 aa)). Residues 122-156 (QKEVALQLQMAQAKLEEVQRERDLLRLKILQAELR) adopt a coiled-coil conformation. The LRR repeat unit spans residues 142-165 (ERDLLRLKILQAELRALPNAVRPA). The segment at 345–369 (RPGDWDCPWCKAVNFSRRENCFHCG) adopts a RanBP2-type zinc-finger fold. 4 residues coordinate Zn(2+): Cys-351, Cys-354, Cys-365, and Cys-368.

The protein belongs to the TEX13 family. Interacts with CNOT1; the interaction may inhibit CNOT1 binding to mRNA and subsequently CNOT1-mediated mRNA degradation.

Its function is as follows. Binds to ssRNA containing the consensus sequence 5'-AGGUAA-3'. Plays a role in transcriptional repression. Required for rapid sperm motility and timely degradation of mRNA via its interaction with CNOT1. This chain is Testis-expressed protein 13A, found in Mus musculus (Mouse).